A 111-amino-acid polypeptide reads, in one-letter code: Transcription initiation factor IIA subunit 2 (111 aa).

Belongs to the TFIIA subunit 2 family. As to quaternary structure, TFIIA is a heterodimer of the large unprocessed subunit 1 and a small subunit gamma. It was originally believed to be a heterotrimer of an alpha, a beta and a gamma subunit. Interacts with NCOA6 general coactivator. TFIIA forms a complex with TBP.

It is found in the nucleus. In terms of biological role, TFIIA is a component of the transcription machinery of RNA polymerase II and plays an important role in transcriptional activation. TFIIA in a complex with TBP mediates transcriptional activity. The chain is Transcription initiation factor IIA subunit 2 (gtf2a2) from Paralichthys olivaceus (Bastard halibut).